Consider the following 379-residue polypeptide: Cobalt-precorrin-5B C(1)-methyltransferase (379 aa).

Belongs to the CbiD family.

The enzyme catalyses Co-precorrin-5B + S-adenosyl-L-methionine = Co-precorrin-6A + S-adenosyl-L-homocysteine. It functions in the pathway cofactor biosynthesis; adenosylcobalamin biosynthesis; cob(II)yrinate a,c-diamide from sirohydrochlorin (anaerobic route): step 6/10. Its function is as follows. Catalyzes the methylation of C-1 in cobalt-precorrin-5B to form cobalt-precorrin-6A. This Salmonella paratyphi A (strain ATCC 9150 / SARB42) protein is Cobalt-precorrin-5B C(1)-methyltransferase.